The sequence spans 158 residues: Endoribonuclease YbeY (158 aa).

The Zn(2+) site is built by His119, His123, and His129.

It belongs to the endoribonuclease YbeY family. Zn(2+) is required as a cofactor.

Its subcellular location is the cytoplasm. Single strand-specific metallo-endoribonuclease involved in late-stage 70S ribosome quality control and in maturation of the 3' terminus of the 16S rRNA. The chain is Endoribonuclease YbeY from Acinetobacter baumannii (strain ACICU).